The chain runs to 386 residues: 1-deoxy-D-xylulose 5-phosphate reductoisomerase (386 aa).

NADPH is bound by residues Thr10, Gly11, Ser12, Ile13, Gly36, Asn38, and Asn122. 1-deoxy-D-xylulose 5-phosphate is bound at residue Lys123. Glu124 lines the NADPH pocket. Asp148 provides a ligand contact to Mn(2+). 1-deoxy-D-xylulose 5-phosphate is bound by residues Ser149, Glu150, Ser174, and His197. Residue Glu150 participates in Mn(2+) binding. Gly203 contacts NADPH. 1-deoxy-D-xylulose 5-phosphate-binding residues include Ser210, Asn215, Lys216, and Glu219. A Mn(2+)-binding site is contributed by Glu219.

It belongs to the DXR family. Requires Mg(2+) as cofactor. The cofactor is Mn(2+).

The catalysed reaction is 2-C-methyl-D-erythritol 4-phosphate + NADP(+) = 1-deoxy-D-xylulose 5-phosphate + NADPH + H(+). Its pathway is isoprenoid biosynthesis; isopentenyl diphosphate biosynthesis via DXP pathway; isopentenyl diphosphate from 1-deoxy-D-xylulose 5-phosphate: step 1/6. Functionally, catalyzes the NADPH-dependent rearrangement and reduction of 1-deoxy-D-xylulose-5-phosphate (DXP) to 2-C-methyl-D-erythritol 4-phosphate (MEP). This is 1-deoxy-D-xylulose 5-phosphate reductoisomerase from Geotalea uraniireducens (strain Rf4) (Geobacter uraniireducens).